Consider the following 613-residue polypeptide: Probable inactive purple acid phosphatase 1 (613 aa).

The signal sequence occupies residues 1–24; it reads MRESLVAILVTVISVLGAIHQVKS. N-linked (GlcNAc...) asparagine glycans are attached at residues asparagine 89 and asparagine 116. Aspartate 295 contacts Fe cation. A glycan (N-linked (GlcNAc...) asparagine) is linked at asparagine 316. Fe cation-binding residues include aspartate 336 and tyrosine 339. Aspartate 336 is a binding site for Zn(2+). Zn(2+) contacts are provided by asparagine 369, histidine 458, and histidine 500. Asparagine 369 contributes to the substrate binding site. 500 to 502 is a binding site for substrate; the sequence is HAH. Histidine 502 contributes to the Fe cation binding site. N-linked (GlcNAc...) asparagine glycans are attached at residues asparagine 528 and asparagine 551.

The protein belongs to the metallophosphoesterase superfamily. Purple acid phosphatase family. As to quaternary structure, homodimer. Requires Fe cation as cofactor. Zn(2+) serves as cofactor. In terms of tissue distribution, expressed in roots, stems, leaves, flowers and siliques.

It is found in the secreted. The protein is Probable inactive purple acid phosphatase 1 (PAP1) of Arabidopsis thaliana (Mouse-ear cress).